We begin with the raw amino-acid sequence, 188 residues long: Elongation factor P 1 (188 aa).

The protein belongs to the elongation factor P family.

It is found in the cytoplasm. It functions in the pathway protein biosynthesis; polypeptide chain elongation. Involved in peptide bond synthesis. Stimulates efficient translation and peptide-bond synthesis on native or reconstituted 70S ribosomes in vitro. Probably functions indirectly by altering the affinity of the ribosome for aminoacyl-tRNA, thus increasing their reactivity as acceptors for peptidyl transferase. This chain is Elongation factor P 1 (efp1), found in Porphyromonas gingivalis (strain ATCC BAA-308 / W83).